The sequence spans 195 residues: Imidazoleglycerol-phosphate dehydratase (195 aa).

The protein belongs to the imidazoleglycerol-phosphate dehydratase family.

The protein localises to the cytoplasm. It catalyses the reaction D-erythro-1-(imidazol-4-yl)glycerol 3-phosphate = 3-(imidazol-4-yl)-2-oxopropyl phosphate + H2O. It participates in amino-acid biosynthesis; L-histidine biosynthesis; L-histidine from 5-phospho-alpha-D-ribose 1-diphosphate: step 6/9. This is Imidazoleglycerol-phosphate dehydratase from Sphingopyxis alaskensis (strain DSM 13593 / LMG 18877 / RB2256) (Sphingomonas alaskensis).